The sequence spans 310 residues: Glycine--tRNA ligase alpha subunit (310 aa).

This sequence belongs to the class-II aminoacyl-tRNA synthetase family. As to quaternary structure, tetramer of two alpha and two beta subunits.

The protein localises to the cytoplasm. The catalysed reaction is tRNA(Gly) + glycine + ATP = glycyl-tRNA(Gly) + AMP + diphosphate. This chain is Glycine--tRNA ligase alpha subunit, found in Aliivibrio salmonicida (strain LFI1238) (Vibrio salmonicida (strain LFI1238)).